The sequence spans 177 residues: MLDTIVLGGGCFWCVESVFLSVVGVKEVESGYAGGNTKNPDYRSICSGKTGHAEVVKVSFDTEKISLSQILEIFFATHDPTTPNRQGNDVGTQYRSVVMCHSQEQKDIAQEVISTLGNNGTFENPIVTEVVDLKDYYRAEEYHQNYFNKNPYQPYCVFSIPPKLQKLKKYFPDQVSA.

Cysteine 11 is an active-site residue.

The protein belongs to the MsrA Met sulfoxide reductase family.

It carries out the reaction L-methionyl-[protein] + [thioredoxin]-disulfide + H2O = L-methionyl-(S)-S-oxide-[protein] + [thioredoxin]-dithiol. The enzyme catalyses [thioredoxin]-disulfide + L-methionine + H2O = L-methionine (S)-S-oxide + [thioredoxin]-dithiol. Its function is as follows. Has an important function as a repair enzyme for proteins that have been inactivated by oxidation. Catalyzes the reversible oxidation-reduction of methionine sulfoxide in proteins to methionine. This is Peptide methionine sulfoxide reductase MsrA from Trichodesmium erythraeum (strain IMS101).